The following is a 362-amino-acid chain: Mannan endo-1,4-beta-mannosidase (362 aa).

The signal sequence occupies residues 1–26 (MFKKHTISLLIIFLLASAVLAKPIEA). A GH26 domain is found at 38–349 (QTTKTVMNWL…YHDSWTLNKG (312 aa)). His131 provides a ligand contact to substrate. Glu193 functions as the Proton donor in the catalytic mechanism. Residues Trp198 and Tyr268 each coordinate substrate. Glu292 serves as the catalytic Nucleophile. 324 to 325 (WN) is a substrate binding site.

The protein belongs to the glycosyl hydrolase 26 family. In terms of assembly, homodimer.

The protein localises to the secreted. It carries out the reaction Random hydrolysis of (1-&gt;4)-beta-D-mannosidic linkages in mannans, galactomannans and glucomannans.. In terms of biological role, involved in the degradation of glucomannan. Catalyzes the endo hydrolysis of beta-1,4-linked mannan, galactomannan and glucomannan. This Bacillus subtilis (strain 168) protein is Mannan endo-1,4-beta-mannosidase.